The primary structure comprises 271 residues: Mannosyl-3-phosphoglycerate phosphatase (271 aa).

Asp13 serves as the catalytic Nucleophile. Residues Asp13, Asp15, and Asp214 each contribute to the Mg(2+) site.

Belongs to the HAD-like hydrolase superfamily. MPGP family. The cofactor is Mg(2+).

The protein resides in the cytoplasm. The catalysed reaction is 2-O-(alpha-D-mannosyl)-3-phosphoglycerate + H2O = (2R)-2-O-(alpha-D-mannosyl)-glycerate + phosphate. This is Mannosyl-3-phosphoglycerate phosphatase from Escherichia coli (strain SMS-3-5 / SECEC).